The sequence spans 175 residues: MPRRREVPKREILPDPKHHSELLAKFINVLMVSGKKSIAEKITYGALSVMEERVKKIKKNEEDGSETGSSGSAGAVLRYFEEALDNVRPSVEVRSRRVGGATYQVPVEVRHDRSIALGMRWIVQAARTRGEKGMMLRLAGELMDAYENKGSAVKKREDTHKMAKANQAFAHFRWN.

It belongs to the universal ribosomal protein uS7 family. In terms of assembly, part of the 30S ribosomal subunit. Contacts proteins S9 and S11.

Functionally, one of the primary rRNA binding proteins, it binds directly to 16S rRNA where it nucleates assembly of the head domain of the 30S subunit. Is located at the subunit interface close to the decoding center, probably blocks exit of the E-site tRNA. In Legionella pneumophila (strain Paris), this protein is Small ribosomal subunit protein uS7.